The chain runs to 2504 residues: Fatty acid synthase (2504 aa).

Met-1 is modified (N-acetylmethionine). Residues 1–406 (MEEVVIAGMS…GSNVHVILQP (406 aa)) form the Ketosynthase family 3 (KS3) domain. The residue at position 59 (Lys-59) is an N6-acetyllysine. The residue at position 63 (Ser-63) is a Phosphoserine. An N6-acetyllysine modification is found at Lys-70. The For beta-ketoacyl synthase activity role is filled by Cys-161. Ser-207 carries the phosphoserine modification. His-293 functions as the For beta-ketoacyl synthase activity in the catalytic mechanism. Residue Lys-298 is modified to N6-acetyllysine. The For beta-ketoacyl synthase activity role is filled by His-331. The acyl and malonyl transferases stretch occupies residues 429-817 (RTLEAVQDLL…INVNPNALFP (389 aa)). Lys-528 is subject to N6-acetyllysine. Ser-581 acts as the For malonyltransferase activity in catalysis. An acyl-CoA contacts are provided by residues 647 to 648 (DT) and Phe-671. The residue at position 673 (Lys-673) is an N6-acetyllysine. Ser-725 carries the phosphoserine modification. Arg-773 serves as a coordination point for an acyl-CoA. Lys-790 carries the post-translational modification N6-acetyllysine. An N-terminal hotdog fold region spans residues 844–967 (VPVAEDFPNG…VYLWEDPNSK (124 aa)). A PKS/mFAS DH domain is found at 844 to 1104 (VPVAEDFPNG…ISRLQTTATS (261 aa)). His-878 functions as the Proton acceptor; for dehydratase activity in the catalytic mechanism. The C-terminal hotdog fold stretch occupies residues 982–1104 (SVSRLTQGEV…ISRLQTTATS (123 aa)). Residue Lys-993 is modified to N6-acetyllysine. The active-site Proton donor; for dehydratase activity is Asp-1032. 2 positions are modified to N6-acetyllysine: Lys-1071 and Lys-1276. Cys-1464 is modified (S-nitrosocysteine). 2 positions are modified to phosphoserine: Ser-1577 and Ser-1587. Residues 1628–1856 (DVPSSWTLEE…VQVREEEPEA (229 aa)) form an enoyl reductase region. 1664–1681 (VLIHSGSGGVGQAAISIA) contributes to the NADP(+) binding site. An N6-(pyridoxal phosphate)lysine; alternate modification is found at Lys-1697. Lys-1697 is subject to N6-acetyllysine; alternate. 2 positions are modified to N6-acetyllysine: Lys-1764 and Lys-1840. Positions 1857–2111 (VLPGAQPTLI…FVLAEKKAVA (255 aa)) are beta-ketoacyl reductase. 1879 to 1894 (SYIITGGLGGFGLELA) provides a ligand contact to NADP(+). At Lys-1988 the chain carries N6-acetyllysine. Cys-2084 carries the S-nitrosocysteine modification. Residues 2112 to 2192 (HGDGDTQRDL…EMSSKTDSAT (81 aa)) form the Carrier domain. Ser-2150 carries the post-translational modification O-(pantetheine 4'-phosphoryl)serine; alternate. Ser-2150 is modified (phosphoserine; alternate). The segment at 2181-2205 (LQEMSSKTDSATDTTAPKSRSDTSL) is disordered. Positions 2185–2198 (SSKTDSATDTTAPK) are enriched in low complexity. 2 positions are modified to phosphoserine: Ser-2190 and Ser-2229. Residues 2201 to 2504 (SDTSLKQNQL…AEPRVSVREG (304 aa)) form a thioesterase region. Ser-2301 functions as the For thioesterase activity in the catalytic mechanism. Lys-2384 is modified (N6-acetyllysine). Lys-2442 is covalently cross-linked (Glycyl lysine isopeptide (Lys-Gly) (interchain with G-Cter in SUMO2)). His-2474 functions as the For thioesterase activity in the catalytic mechanism.

As to quaternary structure, homodimer which is arranged in a head to tail fashion. Interacts with CEACAM1; this interaction is insulin and phosphorylation-dependent; reduces fatty-acid synthase activity. In terms of processing, S-nitrosylation of Fatty acid synthase at cysteine residues Cys-1464 or Cys-2084 is important for the enzyme dimerization. In adipocytes, S-nitrosylation of Fatty acid synthase occurs under physiological conditions and gradually increases during adipogenesis.

The protein resides in the cytoplasm. Its subcellular location is the melanosome. The enzyme catalyses acetyl-CoA + n malonyl-CoA + 2n NADPH + 2n H(+) = a long-chain fatty acid + (n+1) CoA + n CO2 + 2n NADP(+).. It catalyses the reaction holo-[ACP] + acetyl-CoA = acetyl-[ACP] + CoA. It carries out the reaction holo-[ACP] + malonyl-CoA = malonyl-[ACP] + CoA. The catalysed reaction is a fatty acyl-[ACP] + malonyl-[ACP] + H(+) = a 3-oxoacyl-[ACP] + holo-[ACP] + CO2. The enzyme catalyses a (3R)-hydroxyacyl-[ACP] + NADP(+) = a 3-oxoacyl-[ACP] + NADPH + H(+). It catalyses the reaction a (3R)-hydroxyacyl-[ACP] = a (2E)-enoyl-[ACP] + H2O. It carries out the reaction a 2,3-saturated acyl-[ACP] + NADP(+) = a (2E)-enoyl-[ACP] + NADPH + H(+). The catalysed reaction is hexadecanoyl-[ACP] + H2O = hexadecanoate + holo-[ACP] + H(+). The enzyme catalyses acetyl-[ACP] + malonyl-[ACP] + H(+) = 3-oxobutanoyl-[ACP] + holo-[ACP] + CO2. It catalyses the reaction 3-oxobutanoyl-[ACP] + NADPH + H(+) = (3R)-hydroxybutanoyl-[ACP] + NADP(+). It carries out the reaction (3R)-hydroxybutanoyl-[ACP] = (2E)-butenoyl-[ACP] + H2O. The catalysed reaction is (2E)-butenoyl-[ACP] + NADPH + H(+) = butanoyl-[ACP] + NADP(+). The enzyme catalyses butanoyl-[ACP] + malonyl-[ACP] + H(+) = 3-oxohexanoyl-[ACP] + holo-[ACP] + CO2. It catalyses the reaction 3-oxohexanoyl-[ACP] + NADPH + H(+) = (3R)-hydroxyhexanoyl-[ACP] + NADP(+). It carries out the reaction (3R)-hydroxyhexanoyl-[ACP] = (2E)-hexenoyl-[ACP] + H2O. The catalysed reaction is (2E)-hexenoyl-[ACP] + NADPH + H(+) = hexanoyl-[ACP] + NADP(+). The enzyme catalyses hexanoyl-[ACP] + malonyl-[ACP] + H(+) = 3-oxooctanoyl-[ACP] + holo-[ACP] + CO2. It catalyses the reaction 3-oxooctanoyl-[ACP] + NADPH + H(+) = (3R)-hydroxyoctanoyl-[ACP] + NADP(+). It carries out the reaction (3R)-hydroxyoctanoyl-[ACP] = (2E)-octenoyl-[ACP] + H2O. The catalysed reaction is (2E)-octenoyl-[ACP] + NADPH + H(+) = octanoyl-[ACP] + NADP(+). The enzyme catalyses octanoyl-[ACP] + malonyl-[ACP] + H(+) = 3-oxodecanoyl-[ACP] + holo-[ACP] + CO2. It catalyses the reaction 3-oxodecanoyl-[ACP] + NADPH + H(+) = (3R)-hydroxydecanoyl-[ACP] + NADP(+). It carries out the reaction (3R)-hydroxydecanoyl-[ACP] = (2E)-decenoyl-[ACP] + H2O. The catalysed reaction is (2E)-decenoyl-[ACP] + NADPH + H(+) = decanoyl-[ACP] + NADP(+). The enzyme catalyses decanoyl-[ACP] + malonyl-[ACP] + H(+) = 3-oxododecanoyl-[ACP] + holo-[ACP] + CO2. It catalyses the reaction 3-oxododecanoyl-[ACP] + NADPH + H(+) = (3R)-hydroxydodecanoyl-[ACP] + NADP(+). It carries out the reaction (3R)-hydroxydodecanoyl-[ACP] = (2E)-dodecenoyl-[ACP] + H2O. The catalysed reaction is (2E)-dodecenoyl-[ACP] + NADPH + H(+) = dodecanoyl-[ACP] + NADP(+). The enzyme catalyses dodecanoyl-[ACP] + malonyl-[ACP] + H(+) = 3-oxotetradecanoyl-[ACP] + holo-[ACP] + CO2. It catalyses the reaction 3-oxotetradecanoyl-[ACP] + NADPH + H(+) = (3R)-hydroxytetradecanoyl-[ACP] + NADP(+). It carries out the reaction (3R)-hydroxytetradecanoyl-[ACP] = (2E)-tetradecenoyl-[ACP] + H2O. The catalysed reaction is (2E)-tetradecenoyl-[ACP] + NADPH + H(+) = tetradecanoyl-[ACP] + NADP(+). The enzyme catalyses tetradecanoyl-[ACP] + malonyl-[ACP] + H(+) = 3-oxohexadecanoyl-[ACP] + holo-[ACP] + CO2. It catalyses the reaction 3-oxohexadecanoyl-[ACP] + NADPH + H(+) = (3R)-hydroxyhexadecanoyl-[ACP] + NADP(+). It carries out the reaction (3R)-hydroxyhexadecanoyl-[ACP] = (2E)-hexadecenoyl-[ACP] + H2O. The catalysed reaction is (2E)-hexadecenoyl-[ACP] + NADPH + H(+) = hexadecanoyl-[ACP] + NADP(+). The enzyme catalyses hexadecanoyl-[ACP] + malonyl-[ACP] + H(+) = 3-oxooctadecanoyl-[ACP] + holo-[ACP] + CO2. It catalyses the reaction 3-oxooctadecanoyl-[ACP] + NADPH + H(+) = (3R)-hydroxyoctadecanoyl-[ACP] + NADP(+). It carries out the reaction (3R)-hydroxyoctadecanoyl-[ACP] = (2E)-octadecenoyl-[ACP] + H2O. The catalysed reaction is (2E)-octadecenoyl-[ACP] + NADPH + H(+) = octadecanoyl-[ACP] + NADP(+). The enzyme catalyses tetradecanoyl-[ACP] + H2O = tetradecanoate + holo-[ACP] + H(+). Its pathway is lipid metabolism; fatty acid biosynthesis. Functionally, fatty acid synthetase is a multifunctional enzyme that catalyzes the de novo biosynthesis of long-chain saturated fatty acids starting from acetyl-CoA and malonyl-CoA in the presence of NADPH. This multifunctional protein contains 7 catalytic activities and a site for the binding of the prosthetic group 4'-phosphopantetheine of the acyl carrier protein ([ACP]) domain. This chain is Fatty acid synthase (Fasn), found in Mus musculus (Mouse).